A 571-amino-acid polypeptide reads, in one-letter code: L-erythrulose 1-kinase (571 aa).

One can recognise a DhaK domain in the interval 7 to 331 (SPDDFADEAV…WTAPVETPAY (325 aa)). The active-site Tele-hemiaminal-histidine intermediate is His-217. One can recognise a DhaL domain in the interval 367–567 (RNIVAVLETF…FAMLMKALGE (201 aa)). ATP contacts are provided by residues 396-402 (DGDHGQG), 442-443 (TS), Gly-484, Arg-539, and 552-554 (DPG).

It carries out the reaction L-erythrulose + ATP = L-erythrulose 1-phosphate + ADP + H(+). Its pathway is carbohydrate metabolism; L-threitol degradation. Kinase that has a preference for L-erythrulose, producing L-erythrulose-1P. Involved in the degradation pathway of L-threitol, that allows M.smegmatis to grow on this compound as the sole carbon source. Is also able to phosphorylate D-erythrulose and dihydroxyacetone in vitro. The polypeptide is L-erythrulose 1-kinase (Mycolicibacterium smegmatis (strain ATCC 700084 / mc(2)155) (Mycobacterium smegmatis)).